The primary structure comprises 431 residues: MGKNVVVLGTQWGDEGKGKIVDLLTDKVAAVVRFQGGHNAGHTLVIEGKKTALHLIPSGILRQDVQCLIGNGVVLSPEALLKEVRELEANGVAVRDRLKISLACPIILRTHVRIDQARERARGNDKIGTTGRGIGPAYEDKVSRRGVRLGDLCNPADFEIKLREIMSYHNFVLTEYFKEEAEDIDAALEELRQMGEEILPMAADVTDILHDYRKRGEHILFEGAQGSLLDIDLGTYPYVTSSNTTAGGTATGSGFGPLYLDYVLGITKAYTTRVGSGPFPTELFDDMGKHLAVKGNEVGTTTGRSRRCGWFDAVALRHAIQINSVSGICLTKLDVLDGLETVKVCIGYKTPNGEITRPPIGCDSYSDIEPVYEELPGWSESTVGLTSVDQLPENAKAYIRFLEEQIEAPIDIISTGPDRVETITLRHPFGE.

Residues 13 to 19 (GDEGKGK) and 41 to 43 (GHT) contribute to the GTP site. The active-site Proton acceptor is the D14. Positions 14 and 41 each coordinate Mg(2+). IMP is bound by residues 14–17 (DEGK), 39–42 (NAGH), T130, R144, Q225, T240, and R304. The Proton donor role is filled by H42. Position 300-306 (300-306 (TTTGRSR)) interacts with substrate. Residues R306, 332-334 (KLD), and 414-416 (STG) contribute to the GTP site.

Belongs to the adenylosuccinate synthetase family. In terms of assembly, homodimer. Mg(2+) serves as cofactor.

The protein resides in the cytoplasm. It carries out the reaction IMP + L-aspartate + GTP = N(6)-(1,2-dicarboxyethyl)-AMP + GDP + phosphate + 2 H(+). The protein operates within purine metabolism; AMP biosynthesis via de novo pathway; AMP from IMP: step 1/2. Plays an important role in the de novo pathway of purine nucleotide biosynthesis. Catalyzes the first committed step in the biosynthesis of AMP from IMP. This Marinobacter nauticus (strain ATCC 700491 / DSM 11845 / VT8) (Marinobacter aquaeolei) protein is Adenylosuccinate synthetase.